Reading from the N-terminus, the 96-residue chain is Probable spanin, outer lipoprotein subunit (96 aa).

An N-terminal signal peptide occupies residues 1–24 (MRTKIFAAGTVLTCLMLCAGCTSA). Residues 25-96 (PPAPTPVIVP…QTRQPAQGAD (72 aa)) are Periplasmic-facing. The stretch at 54 to 78 (GDLSADIRQLENALARCASQVKMIK) forms a coiled coil.

In terms of assembly, interacts (via C-terminus) with the spanin inner membrane subunit (via C-terminus). Part of the spanin complex which spans the entire periplasmic space. The spanin complex is composed of spanin inner membrane subunit and spanin outer membrane subunit.

It localises to the host cell outer membrane. Functionally, component of the spanin complex that disrupts the host outer membrane and participates in cell lysis during virus exit. The spanin complex conducts the final step in host lysis by disrupting the outer membrane after holin and endolysin action have permeabilized the inner membrane and degraded the host peptidoglycans. Host outer membrane disruption is possibly due to local fusion between the inner and outer membrane performed by the spanin complex. In Enterobacteriaceae (Bacteriophage P2), this protein is Probable spanin, outer lipoprotein subunit (lysC).